The chain runs to 353 residues: Photosystem II protein D1 (353 aa).

Position 2 is an N-acetylthreonine (T2). The residue at position 2 (T2) is a Phosphothreonine. 3 helical membrane-spanning segments follow: residues 29-46, 118-133, and 142-156; these read YIGW…TATS, HFLL…EWEL, and WIAV…AATA. A chlorophyll a-binding site is contributed by H118. Y126 contacts pheophytin a. [CaMn4O5] cluster is bound by residues D170 and E189. A helical transmembrane segment spans residues 197–218; the sequence is FHMLGVAGVFGGSLFSAMHGSL. H198 contributes to the chlorophyll a binding site. A quinone contacts are provided by residues H215 and 264–265; that span reads SF. Residue H215 participates in Fe cation binding. A Fe cation-binding site is contributed by H272. Residues 274-288 traverse the membrane as a helical segment; that stretch reads FLAAWPVVGIWFTAL. 4 residues coordinate [CaMn4O5] cluster: H332, E333, D342, and A344. Residues 345-353 constitute a propeptide that is removed on maturation; sequence AVEAPSTNG.

This sequence belongs to the reaction center PufL/M/PsbA/D family. As to quaternary structure, PSII is composed of 1 copy each of membrane proteins PsbA, PsbB, PsbC, PsbD, PsbE, PsbF, PsbH, PsbI, PsbJ, PsbK, PsbL, PsbM, PsbT, PsbX, PsbY, PsbZ, Psb30/Ycf12, at least 3 peripheral proteins of the oxygen-evolving complex and a large number of cofactors. It forms dimeric complexes. The cofactor is The D1/D2 heterodimer binds P680, chlorophylls that are the primary electron donor of PSII, and subsequent electron acceptors. It shares a non-heme iron and each subunit binds pheophytin, quinone, additional chlorophylls, carotenoids and lipids. D1 provides most of the ligands for the Mn4-Ca-O5 cluster of the oxygen-evolving complex (OEC). There is also a Cl(-1) ion associated with D1 and D2, which is required for oxygen evolution. The PSII complex binds additional chlorophylls, carotenoids and specific lipids.. Post-translationally, tyr-161 forms a radical intermediate that is referred to as redox-active TyrZ, YZ or Y-Z. C-terminally processed by CTPA; processing is essential to allow assembly of the oxygen-evolving complex and thus photosynthetic growth.

It localises to the plastid. It is found in the chloroplast thylakoid membrane. It catalyses the reaction 2 a plastoquinone + 4 hnu + 2 H2O = 2 a plastoquinol + O2. Functionally, photosystem II (PSII) is a light-driven water:plastoquinone oxidoreductase that uses light energy to abstract electrons from H(2)O, generating O(2) and a proton gradient subsequently used for ATP formation. It consists of a core antenna complex that captures photons, and an electron transfer chain that converts photonic excitation into a charge separation. The D1/D2 (PsbA/PsbD) reaction center heterodimer binds P680, the primary electron donor of PSII as well as several subsequent electron acceptors. In Drimys granadensis, this protein is Photosystem II protein D1.